A 355-amino-acid polypeptide reads, in one-letter code: MKIAVLPGDGIGPEIVNEAVKVLNALDEKFELEQAPVGGAGYEASGHPLPDATLKLAKEADAILFGAVGDWKYDSLERALRPEQAILGLRKHLELFANFRPAICYPQLVDASPLKPELVAGLDILIVRELNGDIYFGQPRGVRTAPDGLFAGEREGFDTMRYSEPEVRRIAHVAFQAARKRAKKLLSVDKANVLETSQFWRDIMIDVSKEYADVELSHMYVDNAAMQLAKAPKQFDVIVTGNMFGDILSDEASMLTGSIGMLPSASLDKNNKGLYEPSHGSAPDIAGKGIANPLATILSAAMMLRYSLNRAEQADRIERAVKTVLEQGYRTGDIATPGGQQVGTTAMGDAVVAAL.

Residues Arg90, Arg100, Arg128, and Asp222 each contribute to the substrate site. Mg(2+)-binding residues include Asp222, Asp246, and Asp250. 280–292 (GSAPDIAGKGIAN) contacts NAD(+).

This sequence belongs to the isocitrate and isopropylmalate dehydrogenases family. LeuB type 1 subfamily. In terms of assembly, homodimer. Mg(2+) serves as cofactor. The cofactor is Mn(2+).

The protein localises to the cytoplasm. It catalyses the reaction (2R,3S)-3-isopropylmalate + NAD(+) = 4-methyl-2-oxopentanoate + CO2 + NADH. It functions in the pathway amino-acid biosynthesis; L-leucine biosynthesis; L-leucine from 3-methyl-2-oxobutanoate: step 3/4. In terms of biological role, catalyzes the oxidation of 3-carboxy-2-hydroxy-4-methylpentanoate (3-isopropylmalate) to 3-carboxy-4-methyl-2-oxopentanoate. The product decarboxylates to 4-methyl-2 oxopentanoate. This is 3-isopropylmalate dehydrogenase from Burkholderia lata (strain ATCC 17760 / DSM 23089 / LMG 22485 / NCIMB 9086 / R18194 / 383).